We begin with the raw amino-acid sequence, 278 residues long: Shikimate dehydrogenase (NADP(+)) (278 aa).

Shikimate-binding positions include 23–25 and threonine 70; that span reads SRS. Lysine 74 functions as the Proton acceptor in the catalytic mechanism. Glutamate 86 is an NADP(+) binding site. Shikimate-binding residues include asparagine 95 and aspartate 110. Residues 135-139, 159-164, and methionine 224 each bind NADP(+); these read GAGGA and NRTKEK. Tyrosine 226 provides a ligand contact to shikimate. Glycine 248 contributes to the NADP(+) binding site.

Belongs to the shikimate dehydrogenase family. In terms of assembly, homodimer.

The catalysed reaction is shikimate + NADP(+) = 3-dehydroshikimate + NADPH + H(+). The protein operates within metabolic intermediate biosynthesis; chorismate biosynthesis; chorismate from D-erythrose 4-phosphate and phosphoenolpyruvate: step 4/7. Involved in the biosynthesis of the chorismate, which leads to the biosynthesis of aromatic amino acids. Catalyzes the reversible NADPH linked reduction of 3-dehydroshikimate (DHSA) to yield shikimate (SA). The sequence is that of Shikimate dehydrogenase (NADP(+)) from Alcanivorax borkumensis (strain ATCC 700651 / DSM 11573 / NCIMB 13689 / SK2).